A 490-amino-acid chain; its full sequence is Alpha-galactosidase (490 aa).

4–70 (FKIAIIGAGS…LPTRVTATTD (67 aa)) is an NAD(+) binding site. Substrate is bound at residue N150. C171 is a binding site for Mn(2+). The active-site Proton donor is H172. H201 lines the Mn(2+) pocket. Residue Y258 is the Proton acceptor of the active site.

This sequence belongs to the glycosyl hydrolase 4 family. Homodimer. Mn(2+) serves as cofactor. It depends on NAD(+) as a cofactor.

It catalyses the reaction Hydrolysis of terminal, non-reducing alpha-D-galactose residues in alpha-D-galactosides, including galactose oligosaccharides, galactomannans and galactolipids.. This chain is Alpha-galactosidase (melA), found in Rhizobium meliloti (strain 1021) (Ensifer meliloti).